Reading from the N-terminus, the 420-residue chain is Histidine--tRNA ligase (420 aa).

The protein belongs to the class-II aminoacyl-tRNA synthetase family. In terms of assembly, homodimer.

It localises to the cytoplasm. It carries out the reaction tRNA(His) + L-histidine + ATP = L-histidyl-tRNA(His) + AMP + diphosphate + H(+). This Streptomyces avermitilis (strain ATCC 31267 / DSM 46492 / JCM 5070 / NBRC 14893 / NCIMB 12804 / NRRL 8165 / MA-4680) protein is Histidine--tRNA ligase.